Reading from the N-terminus, the 85-residue chain is Putative regulatory protein Dtur_1444 (85 aa).

It belongs to the RemA family.

This chain is Putative regulatory protein Dtur_1444, found in Dictyoglomus turgidum (strain DSM 6724 / Z-1310).